Here is a 294-residue protein sequence, read N- to C-terminus: Probable porphobilinogen deaminase (294 aa).

At Cys-233 the chain carries S-(dipyrrolylmethanemethyl)cysteine.

The protein belongs to the HMBS family. The cofactor is dipyrromethane.

It catalyses the reaction 4 porphobilinogen + H2O = hydroxymethylbilane + 4 NH4(+). It participates in porphyrin-containing compound metabolism; protoporphyrin-IX biosynthesis; coproporphyrinogen-III from 5-aminolevulinate: step 2/4. Functionally, tetrapolymerization of the monopyrrole PBG into the hydroxymethylbilane pre-uroporphyrinogen in several discrete steps. This chain is Probable porphobilinogen deaminase, found in Sulfurisphaera tokodaii (strain DSM 16993 / JCM 10545 / NBRC 100140 / 7) (Sulfolobus tokodaii).